The sequence spans 554 residues: Putative F-box/LRR-repeat protein 8 (554 aa).

Residues 71 to 117 (YDYISNLPDECLSLIFQSLTCADLKRCSLVCRRWLTIEGQCRHRLSL) enclose the F-box domain. LRR repeat units lie at residues 119 to 144 (AQSD…VLRS), 148 to 173 (SLGI…KLRG), 174 to 199 (CPEI…SFGS), 205 to 224 (KGMN…SVKR), 250 to 275 (KELH…KIFR), 301 to 325 (RIQM…HLVK), 326 to 351 (TPDC…HIDG), 354 to 379 (TNRI…VLIG), 383 to 404 (TKLS…ALCG), 405 to 428 (SDTV…KLCI), 430 to 455 (NCPI…KVKK), and 456 to 480 (CRGV…NLDA).

The chain is Putative F-box/LRR-repeat protein 8 (FBL8) from Arabidopsis thaliana (Mouse-ear cress).